A 196-amino-acid polypeptide reads, in one-letter code: Aequorin-2 (196 aa).

A propeptide spanning residues 1–7 (MTSKQYS) is cleaved from the precursor. 4 EF-hand domains span residues 18 to 53 (RWIG…IVIN), 54 to 108 (NLGA…AKNE), 117 to 146 (DALF…AGII), and 147 to 182 (QSSE…FWYT). Ca(2+) contacts are provided by Asp-31, Asn-33, Asn-35, Lys-37, and Glu-42. May interact with the chromophore stretches follow at residues 47–57 (ASDIVINNLGA), 62–72 (AKRHKDAVEAF), and 107–117 (NEPTLIRIWGD). Ca(2+) is bound by residues Asp-124, Asp-126, Asn-128, Glu-135, Asp-160, Asp-162, Ser-164, Gln-166, and Glu-171.

Belongs to the aequorin family. Post-translationally, the reduction of the disulfide bond is necessary to regenerate aequorin from apoaequorin.

In terms of biological role, ca(2+)-dependent bioluminescence photoprotein. Displays an emission peak at 470 nm (blue light). Trace amounts of calcium ion trigger the intramolecular oxidation of the chromophore, coelenterazine into coelenteramide and CO(2) with the concomitant emission of light. The chain is Aequorin-2 from Aequorea victoria (Water jellyfish).